Consider the following 60-residue polypeptide: uncharacterized protein (60 aa).

The chain crosses the membrane as a helical span at residues 33 to 55; sequence FRLLRGIFLITLVIWTVVWLKLL.

The protein belongs to the HHV-5 UL2 protein family.

The protein localises to the host membrane. This is an uncharacterized protein from Human cytomegalovirus (strain AD169) (HHV-5).